The primary structure comprises 197 residues: Holliday junction branch migration complex subunit RuvA (197 aa).

The interval 1-64 (MIGHLEGRLR…EDAIQLYGFR (64 aa)) is domain I. Positions 65–143 (TVAEKDMFLR…VKKGREAEQP (79 aa)) are domain II. The tract at residues 144-145 (AP) is flexible linker. Residues 146–197 (AAESSYGDAYSALVNLGYRPAEAEKALGKAIKSLGADPPVEKLLKETLRLLA) are domain III.

It belongs to the RuvA family. In terms of assembly, homotetramer. Forms an RuvA(8)-RuvB(12)-Holliday junction (HJ) complex. HJ DNA is sandwiched between 2 RuvA tetramers; dsDNA enters through RuvA and exits via RuvB. An RuvB hexamer assembles on each DNA strand where it exits the tetramer. Each RuvB hexamer is contacted by two RuvA subunits (via domain III) on 2 adjacent RuvB subunits; this complex drives branch migration. In the full resolvosome a probable DNA-RuvA(4)-RuvB(12)-RuvC(2) complex forms which resolves the HJ.

It is found in the cytoplasm. Its function is as follows. The RuvA-RuvB-RuvC complex processes Holliday junction (HJ) DNA during genetic recombination and DNA repair, while the RuvA-RuvB complex plays an important role in the rescue of blocked DNA replication forks via replication fork reversal (RFR). RuvA specifically binds to HJ cruciform DNA, conferring on it an open structure. The RuvB hexamer acts as an ATP-dependent pump, pulling dsDNA into and through the RuvAB complex. HJ branch migration allows RuvC to scan DNA until it finds its consensus sequence, where it cleaves and resolves the cruciform DNA. The sequence is that of Holliday junction branch migration complex subunit RuvA from Syntrophobacter fumaroxidans (strain DSM 10017 / MPOB).